A 428-amino-acid polypeptide reads, in one-letter code: Serine--tRNA ligase (428 aa).

235-237 (TAE) contacts L-serine. 266-268 (RSE) contacts ATP. Glu289 contacts L-serine. 353–356 (EISS) contacts ATP. Ser389 contributes to the L-serine binding site.

Belongs to the class-II aminoacyl-tRNA synthetase family. Type-1 seryl-tRNA synthetase subfamily. As to quaternary structure, homodimer. The tRNA molecule binds across the dimer.

The protein resides in the cytoplasm. The catalysed reaction is tRNA(Ser) + L-serine + ATP = L-seryl-tRNA(Ser) + AMP + diphosphate + H(+). It carries out the reaction tRNA(Sec) + L-serine + ATP = L-seryl-tRNA(Sec) + AMP + diphosphate + H(+). Its pathway is aminoacyl-tRNA biosynthesis; selenocysteinyl-tRNA(Sec) biosynthesis; L-seryl-tRNA(Sec) from L-serine and tRNA(Sec): step 1/1. Catalyzes the attachment of serine to tRNA(Ser). Is also able to aminoacylate tRNA(Sec) with serine, to form the misacylated tRNA L-seryl-tRNA(Sec), which will be further converted into selenocysteinyl-tRNA(Sec). The polypeptide is Serine--tRNA ligase (Shewanella baltica (strain OS185)).